The chain runs to 104 residues: Large ribosomal subunit protein bL21 (104 aa).

Belongs to the bacterial ribosomal protein bL21 family. In terms of assembly, part of the 50S ribosomal subunit. Contacts protein L20.

Its function is as follows. This protein binds to 23S rRNA in the presence of protein L20. This chain is Large ribosomal subunit protein bL21, found in Streptococcus gordonii (strain Challis / ATCC 35105 / BCRC 15272 / CH1 / DL1 / V288).